The primary structure comprises 253 residues: Aspartic acid-rich protein (253 aa).

The first 22 residues, 1–22 (MYLFIYIFFFFFFFFFFVIVQK), serve as a signal peptide directing secretion. The interval 211 to 253 (DDFDEEFDDDDDDDDDDDDDDDDDDKDDDLDGDDDGNNDDNDD) is disordered.

It belongs to the nucleosome assembly protein (NAP) family.

The polypeptide is Aspartic acid-rich protein (Plasmodium falciparum (isolate fcm17 / Senegal)).